A 401-amino-acid chain; its full sequence is Ufm1-specific protease 2 (401 aa).

Active-site residues include C234, D358, and H360.

The protein belongs to the peptidase C78 family.

The protein resides in the endoplasmic reticulum. The protein localises to the cytoplasm. Its subcellular location is the nucleus. In terms of biological role, thiol-dependent isopeptidase that specifically cleaves UFM1, a ubiquitin-like modifier protein, from conjugated proteins. While it is also able to mediate the processing of UFM1 precursors, a prerequisite for conjugation reactions, ufsp2 mainly acts as a protein deUFMylase that mediates deconjugation of UFM1 from target proteins. In Danio rerio (Zebrafish), this protein is Ufm1-specific protease 2.